Consider the following 447-residue polypeptide: Trigger factor (447 aa).

Positions 188–273 (GDKLVIDFEG…VNDIQVAEDF (86 aa)) constitute a PPIase FKBP-type domain.

The protein belongs to the FKBP-type PPIase family. Tig subfamily.

The protein resides in the cytoplasm. The catalysed reaction is [protein]-peptidylproline (omega=180) = [protein]-peptidylproline (omega=0). In terms of biological role, involved in protein export. Acts as a chaperone by maintaining the newly synthesized protein in an open conformation. Functions as a peptidyl-prolyl cis-trans isomerase. The protein is Trigger factor of Wolbachia sp. subsp. Brugia malayi (strain TRS).